Consider the following 135-residue polypeptide: Ribonuclease P protein component (135 aa).

The interval 115–135 (ETEPVSPVSPTSLPQNERGSP) is disordered. The span at 122–135 (VSPTSLPQNERGSP) shows a compositional bias: polar residues.

Belongs to the RnpA family. In terms of assembly, consists of a catalytic RNA component (M1 or rnpB) and a protein subunit.

It carries out the reaction Endonucleolytic cleavage of RNA, removing 5'-extranucleotides from tRNA precursor.. In terms of biological role, RNaseP catalyzes the removal of the 5'-leader sequence from pre-tRNA to produce the mature 5'-terminus. It can also cleave other RNA substrates such as 4.5S RNA. The protein component plays an auxiliary but essential role in vivo by binding to the 5'-leader sequence and broadening the substrate specificity of the ribozyme. The polypeptide is Ribonuclease P protein component (Chloroflexus aggregans (strain MD-66 / DSM 9485)).